Reading from the N-terminus, the 225-residue chain is Biosynthetic peptidoglycan transglycosylase (225 aa).

A helical membrane pass occupies residues 12-32 (IWFVAWRFLLLFVIVLFLFRF).

It belongs to the glycosyltransferase 51 family.

The protein resides in the cell inner membrane. The catalysed reaction is [GlcNAc-(1-&gt;4)-Mur2Ac(oyl-L-Ala-gamma-D-Glu-L-Lys-D-Ala-D-Ala)](n)-di-trans,octa-cis-undecaprenyl diphosphate + beta-D-GlcNAc-(1-&gt;4)-Mur2Ac(oyl-L-Ala-gamma-D-Glu-L-Lys-D-Ala-D-Ala)-di-trans,octa-cis-undecaprenyl diphosphate = [GlcNAc-(1-&gt;4)-Mur2Ac(oyl-L-Ala-gamma-D-Glu-L-Lys-D-Ala-D-Ala)](n+1)-di-trans,octa-cis-undecaprenyl diphosphate + di-trans,octa-cis-undecaprenyl diphosphate + H(+). It participates in cell wall biogenesis; peptidoglycan biosynthesis. In terms of biological role, peptidoglycan polymerase that catalyzes glycan chain elongation from lipid-linked precursors. The polypeptide is Biosynthetic peptidoglycan transglycosylase (Marinomonas sp. (strain MWYL1)).